A 251-amino-acid polypeptide reads, in one-letter code: Core protein VP8 (251 aa).

The propeptide at methionine 1–glycine 32 is removed by core protease OPG083.

The protein belongs to the orthopoxvirus OPG098 family. Undergoes morphogenesis-associated proteolysis which cleaves the 28 kDa to a 25-kDa product. Proteolytic cleavage of major core proteins P4a (OPG136), P4b (OPG129), and VP8 (OPG098), which occurs at a late stage of core formation, is required for production of infectious mature virions (MV).

The protein localises to the virion. It localises to the host cytoplasm. Major core structural protein. In Homo sapiens (Human), this protein is Core protein VP8 (OPG098).